The primary structure comprises 1279 residues: ATP-dependent helicase/nuclease subunit A (1279 aa).

One can recognise a UvrD-like helicase ATP-binding domain in the interval 4–499; sequence TKWTDEQRQA…VKLFKNFRSR (496 aa). 25–32 is an ATP binding site; sequence AGAGAGKT. In terms of domain architecture, UvrD-like helicase C-terminal spans 526–853; that stretch reads EEALKVGASY…RIMSIHKSKG (328 aa).

It belongs to the helicase family. AddA subfamily. In terms of assembly, heterodimer of AddA and AddB/RexB. Mg(2+) serves as cofactor.

It carries out the reaction Couples ATP hydrolysis with the unwinding of duplex DNA by translocating in the 3'-5' direction.. It catalyses the reaction ATP + H2O = ADP + phosphate + H(+). Functionally, the heterodimer acts as both an ATP-dependent DNA helicase and an ATP-dependent, dual-direction single-stranded exonuclease. Recognizes the chi site generating a DNA molecule suitable for the initiation of homologous recombination. The AddA nuclease domain is required for chi fragment generation; this subunit has the helicase and 3' -&gt; 5' nuclease activities. This Clostridium botulinum (strain 657 / Type Ba4) protein is ATP-dependent helicase/nuclease subunit A.